Reading from the N-terminus, the 541-residue chain is Cytosolic phospholipase A2 gamma (541 aa).

A PLA2c domain is found at 1 to 541; it reads MGSSEVSIIP…KDSARSCCLA (541 aa). The Nucleophile role is filled by Ser82. The interval 260-292 is required for lipid droplet localization; that stretch reads LTLKGLWRRAVANAKSIGHLIFARLLRLQESSQ. A Phosphoserine modification is found at Ser337. The active-site Proton acceptor is the Asp385. Cysteine methyl ester is present on Cys538. A lipid anchor (S-farnesyl cysteine) is attached at Cys538. Residues 539–541 constitute a propeptide, removed in mature form; the sequence is CLA.

As to quaternary structure, (Microbial infection) Interacts with HCV non-structural protein 4B/NS4B; this interaction likely initiates the recruitment of replication complexes to lipid droplets. As to expression, highly expressed in heart and skeletal muscle.

The protein resides in the cell membrane. The protein localises to the endoplasmic reticulum membrane. It is found in the mitochondrion membrane. It localises to the lipid droplet. The enzyme catalyses a 1,2-diacyl-sn-glycero-3-phosphocholine + H2O = a 1-acyl-sn-glycero-3-phosphocholine + a fatty acid + H(+). It carries out the reaction a 1-O-alkyl-2-acyl-sn-glycero-3-phosphocholine + H2O = a 1-O-alkyl-sn-glycero-3-phosphocholine + a fatty acid + H(+). The catalysed reaction is 1,2-dihexadecanoyl-sn-glycero-3-phosphocholine + H2O = 1-hexadecanoyl-sn-glycero-3-phosphocholine + hexadecanoate + H(+). It catalyses the reaction 1-hexadecanoyl-2-(9Z-octadecenoyl)-sn-glycero-3-phosphocholine + H2O = 1-hexadecanoyl-sn-glycero-3-phosphocholine + (9Z)-octadecenoate + H(+). The enzyme catalyses 1-hexadecanoyl-2-(9Z,12Z-octadecadienoyl)-sn-glycero-3-phosphocholine + H2O = (9Z,12Z)-octadecadienoate + 1-hexadecanoyl-sn-glycero-3-phosphocholine + H(+). It carries out the reaction 1-hexadecanoyl-2-(5Z,8Z,11Z,14Z-eicosatetraenoyl)-sn-glycero-3-phosphocholine + H2O = 1-hexadecanoyl-sn-glycero-3-phosphocholine + (5Z,8Z,11Z,14Z)-eicosatetraenoate + H(+). The catalysed reaction is 1-O-hexadecyl-2-(5Z,8Z,11Z,14Z)-eicosatetraenoyl-sn-glycero-3-phosphocholine + H2O = 1-O-hexadecyl-sn-glycero-3-phosphocholine + (5Z,8Z,11Z,14Z)-eicosatetraenoate + H(+). It catalyses the reaction 1-hexadecanoyl-2-(5Z,8Z,11Z,14Z-eicosatetraenoyl)-sn-glycero-3-phosphocholine + H2O = 2-(5Z,8Z,11Z,14Z)-eicosatetraenoyl-sn-glycero-3-phosphocholine + hexadecanoate + H(+). The enzyme catalyses a 1-acyl-sn-glycero-3-phosphocholine + H2O = sn-glycerol 3-phosphocholine + a fatty acid + H(+). It carries out the reaction 1-hexadecanoyl-sn-glycero-3-phosphocholine + H2O = sn-glycerol 3-phosphocholine + hexadecanoate + H(+). The catalysed reaction is 2 1-hexadecanoyl-sn-glycero-3-phosphocholine = 1,2-dihexadecanoyl-sn-glycero-3-phosphocholine + sn-glycerol 3-phosphocholine. It catalyses the reaction 1-hexadecanoyl-sn-glycero-3-phosphoethanolamine + 1-hexadecanoyl-sn-glycero-3-phosphocholine = 1,2-dihexadecanoyl-sn-glycero-3-phosphoethanolamine + sn-glycerol 3-phosphocholine. The enzyme catalyses 1-hexadecanoyl-sn-glycero-3-phosphoethanolamine + 1-hexadecanoyl-sn-glycero-3-phosphocholine = sn-glycero-3-phosphoethanolamine + 1,2-dihexadecanoyl-sn-glycero-3-phosphocholine. It carries out the reaction 2 1-hexadecanoyl-sn-glycero-3-phosphoethanolamine = 1,2-dihexadecanoyl-sn-glycero-3-phosphoethanolamine + sn-glycero-3-phosphoethanolamine. The catalysed reaction is 1-O-hexadecyl-sn-glycero-3-phosphocholine + 1-hexadecanoyl-sn-glycero-3-phosphocholine = 1-O-hexadecyl-2-hexadecanoyl-sn-glycero-3-phosphocholine + sn-glycerol 3-phosphocholine. It catalyses the reaction a 1-O-(1Z-alkenyl)-sn-glycero-3-phosphoethanolamine + 1-hexadecanoyl-sn-glycero-3-phosphocholine = 1-O-(1Z)-alkenyl-2-hexadecanoyl-sn-glycero-3-phosphoethanolamine + sn-glycerol 3-phosphocholine. The enzyme catalyses 1-O-hexadecyl-sn-glycero-3-phosphocholine + 1-hexadecanoyl-sn-glycero-3-phosphoethanolamine = 1-O-hexadecyl-2-hexadecanoyl-sn-glycero-3-phosphocholine + sn-glycero-3-phosphoethanolamine. It carries out the reaction 1-octadecanoyl-2-(5Z,8Z,11Z,14Z)-eicosatetraenoyl-sn-glycero-3-phosphoethanolamine + 1-hexadecanoyl-sn-glycero-3-phosphocholine = 1-octadecanoyl-sn-glycero-3-phosphoethanolamine + 1-hexadecanoyl-2-(5Z,8Z,11Z,14Z-eicosatetraenoyl)-sn-glycero-3-phosphocholine. The catalysed reaction is 1-octadecanoyl-2-(5Z,8Z,11Z,14Z)-eicosatetraenoyl-sn-glycero-3-phosphoethanolamine + 1-O-hexadecyl-sn-glycero-3-phosphocholine = 1-octadecanoyl-sn-glycero-3-phosphoethanolamine + 1-O-hexadecyl-2-(5Z,8Z,11Z,14Z)-eicosatetraenoyl-sn-glycero-3-phosphocholine. It catalyses the reaction 1-hexadecanoyl-2-(9Z,12Z-octadecadienoyl)-sn-glycero-3-phosphocholine + a 1-O-(1Z-alkenyl)-sn-glycero-3-phosphoethanolamine = 1-O-(1Z-alkenyl)-2-(9Z,12Z-octadecadienoyl)-sn-glycero-3-phosphoethanolamine + 1-hexadecanoyl-sn-glycero-3-phosphocholine. The enzyme catalyses 1-hexadecanoyl-2-(5Z,8Z,11Z,14Z-eicosatetraenoyl)-sn-glycero-3-phosphocholine + a 1-O-(1Z-alkenyl)-sn-glycero-3-phosphoethanolamine = 1-O-(1Z)-alkenyl-2-(5Z,8Z,11Z,14Z)-eicosatetraenoyl-sn-glycero-3-phosphoethanolamine + 1-hexadecanoyl-sn-glycero-3-phosphocholine. Not regulated by calcium, coenzyme A or ATP. Lysophospholipase activity is inhibited by palmitoyl-CoA. Lysophospholipase and O-acyltransferase activities are inhibited by methylarachidonoylfluorophosphonate. Lysophospholipase activity is inhibited by phosphatidate or lysophosphatidate. O-acyltransferase activity is up-regulated at low concentration (10-20 uM) of phosphatidate or lysophosphatidate, but inhibited at higher concentrations. Its function is as follows. Calcium-independent phospholipase, lysophospholipase and O-acyltransferase involved in phospholipid remodeling with implications in endoplasmic reticulum membrane homeostasis and lipid droplet biogenesis. Preferentially hydrolyzes the ester bond of the fatty acyl group attached at the sn-2 position of phospholipids with choline and ethanolamine head groups, producing lysophospholipids that are used in deacylation-reacylation cycles. Transfers the sn-1 fatty acyl from one lysophospholipid molecule to the sn-2 position of another lysophospholipid to form diacyl, alkylacyl and alkenylacyl glycerophospholipids. Cleaves ester bonds but not alkyl or alkenyl ether bonds at sn-1 position of lysophospholipids. Catalyzes sn-2 fatty acyl transfer from phospholipids to the sn-2 position of 1-O-alkyl or 1-O-alkenyl lysophospholipids with lower efficiency. In response to dietary fatty acids, may play a role in the formation of nascent lipid droplets from the endoplasmic reticulum likely by regulating the phospholipid composition of these organelles. Functionally, (Microbial infection) May play a role in replication and assembly of human hepatitis C virus (HCV). In response to HCV infection, promotes remodeling of host endoplasmic reticulum membranes to form organelle-like structures called membranous web, where HCV replication occur. Can further mediate translocation of replication complexes to lipid droplets to enable virion assembly. (Microbial infection) May facilitate human T-lymphotropic virus type 1 (HTLV-1) infection by promoting leukotriene B4 (LTB4) biosynthesis. LTB4 acts as a chemoattractant for HTLV-1-infected CD4-positive T cells and favors cell to cell viral transmission. This chain is Cytosolic phospholipase A2 gamma (PLA2G4C), found in Homo sapiens (Human).